The following is a 214-amino-acid chain: Methyltransferase HEMK2 (214 aa).

The S-adenosyl-L-homocysteine site is built by T29, E51, G53, D77, D103, L104, and N122. S-adenosyl-L-methionine-binding residues include T29, E51, G53, D77, D103, L104, and N122. Position 122 (N122) interacts with a protein.

It belongs to the eukaryotic/archaeal PrmC-related family. In terms of assembly, heterodimer; heterodimerization with TRMT112 is required for S-adenosyl-L-methionine-binding. As to quaternary structure, does not interact with TRMT112. Post-translationally, ubiquitinated, leading to its degradation by the proteasome. In terms of tissue distribution, widely expressed, with highest expression in parathyroid and pituitary glands, followed by adrenal gland and kidney, and lowest expression in leukocytes and mammary gland.

The protein localises to the nucleus. It carries out the reaction L-lysyl-[histone] + S-adenosyl-L-methionine = N(6)-methyl-L-lysyl-[histone] + S-adenosyl-L-homocysteine + H(+). It catalyses the reaction L-glutaminyl-[protein] + S-adenosyl-L-methionine = N(5)-methyl-L-glutaminyl-[protein] + S-adenosyl-L-homocysteine + H(+). The catalysed reaction is methylarsonous acid + S-adenosyl-L-methionine = dimethylarsinate + S-adenosyl-L-homocysteine + 2 H(+). Methyltransferase that can methylate proteins and, to a lower extent, arsenic. Catalytic subunit of a heterodimer with TRMT112, which monomethylates 'Lys-12' of histone H4 (H4K12me1), a modification present at the promoters of numerous genes encoding cell cycle regulators. Catalytic subunit of a heterodimer with TRMT112, which catalyzes N5-methylation of Glu residue of proteins with a Gly-Gln-Xaa-Xaa-Xaa-Arg motif. Methylates ETF1 on 'Gln-185'; ETF1 needs to be complexed to ERF3 in its GTP-bound form to be efficiently methylated. May also play a role in the modulation of arsenic-induced toxicity by mediating the conversion of monomethylarsonous acid (3+) into the less toxic dimethylarsonic acid. It however only plays a limited role in arsenic metabolism compared with AS3MT. The chain is Methyltransferase HEMK2 from Homo sapiens (Human).